The chain runs to 695 residues: Follicle-stimulating hormone receptor (695 aa).

Residues 1–17 (MALFLVALLAFLSLGSG) form the signal peptide. 2 cysteine pairs are disulfide-bonded: Cys18-Cys25 and Cys23-Cys32. The 29-residue stretch at 18–46 (CHHRLCHCSNGVFLCQDSKVTEMPSDLPR) folds into the LRRNT domain. The Extracellular portion of the chain corresponds to 18-366 (CHHRLCHCSN…EDIMGYDILR (349 aa)). LRR repeat units follow at residues 48 to 70 (AVEL…SGFG), 71 to 93 (DLEK…VFSN), 96 to 118 (KLHE…AFQN), 121 to 142 (NLRY…HKIQ), 143 to 167 (SLQK…SFMG), 171 to 192 (ESMI…AFNG), 194 to 216 (QLDE…VFQG), 219 to 239 (GPVI…YGLE), and 240 to 262 (NLKK…EKFV). N-linked (GlcNAc...) asparagine glycans are attached at residues Asn191 and Asn199. Disulfide bonds link Cys275–Cys346, Cys276–Cys292, Cys276–Cys356, and Cys292–Cys338. A glycan (N-linked (GlcNAc...) asparagine) is linked at Asn293. Tyr335 carries the post-translational modification Sulfotyrosine. Residues 367–387 (VLIWFISILAITGNILVLVIL) traverse the membrane as a helical segment. At 388-398 (ITSQYKLTVPR) the chain is on the cytoplasmic side. A helical membrane pass occupies residues 399 to 421 (FLMCNLAFADLCIGIYLLLIASV). Residues 422–443 (DVHTKSQYHNYAIDWQTGAGCD) lie on the Extracellular side of the membrane. The cysteines at positions 442 and 517 are disulfide-linked. A helical membrane pass occupies residues 444 to 465 (AAGFFTVFASELSVYTLTAITL). Residues 466–485 (ERWHTITHAMQLECKVHVRH) are Cytoplasmic-facing. The chain crosses the membrane as a helical span at residues 486–508 (AASIMLVGWVFAFAVALFPIFGI). At 509 to 528 (SSYMKVSICLPMDIDSPLSQ) the chain is on the extracellular side. The helical transmembrane segment at 529 to 550 (LYVMSLLVLNVLAFVVICGCYT) threads the bilayer. The Cytoplasmic segment spans residues 551–573 (HIYLTVRNPNITSSSSDTKIAKR). The chain crosses the membrane as a helical span at residues 574-597 (MAMLIFTDFLCMAPISFFAISASL). Residues 598–608 (KVPLITVSKSK) lie on the Extracellular side of the membrane. A helical transmembrane segment spans residues 609 to 630 (ILLVLFYPINSCANPFLYAIFT). Over 631 to 695 (RNFRRDFFIL…LIPLRHLAKN (65 aa)) the chain is Cytoplasmic.

This sequence belongs to the G-protein coupled receptor 1 family. FSH/LSH/TSH subfamily. Homotrimer. Functions as a homotrimer binding the FSH hormone heterodimer composed of CGA and FSHB. Interacts with ARRB2. Interacts with APPL2; interaction is independent of follicle stimulating hormone stimulation. N-glycosylated; indirectly required for FSH-binding, possibly via a conformational change that allows high affinity binding of hormone. In terms of processing, sulfated. As to expression, isoform FSH-R3 is expressed in ovary and testis, but not in kidney (at protein level).

It is found in the cell membrane. Its function is as follows. G protein-coupled receptor for follitropin, the follicle-stimulating hormone. The activity of isoform FSH-R1 is mediated by G proteins which activate adenylate cyclase. Isoform FSH-R2 and isoform FSH-R3 also bind FSH, but this does not result in activation of adenylate cyclase. Isoform FSH-R3 may be involved in calcium signaling. Through cAMP production activates the downstream PI3K-AKT and ERK1/ERK2 signaling pathways. The protein is Follicle-stimulating hormone receptor (FSHR) of Ovis aries (Sheep).